The following is a 361-amino-acid chain: Putative agmatine deiminase (361 aa).

Cys354 (amidino-cysteine intermediate) is an active-site residue.

It belongs to the agmatine deiminase family.

The enzyme catalyses agmatine + H2O = N-carbamoylputrescine + NH4(+). This chain is Putative agmatine deiminase, found in Streptococcus pneumoniae (strain ATCC 700669 / Spain 23F-1).